A 464-amino-acid polypeptide reads, in one-letter code: ATP-dependent protease ATPase subunit HslU (464 aa).

ATP contacts are provided by residues V19, 61–66 (GVGKTE), D278, E342, and R414.

Belongs to the ClpX chaperone family. HslU subfamily. In terms of assembly, a double ring-shaped homohexamer of HslV is capped on each side by a ring-shaped HslU homohexamer. The assembly of the HslU/HslV complex is dependent on binding of ATP.

It localises to the cytoplasm. ATPase subunit of a proteasome-like degradation complex; this subunit has chaperone activity. The binding of ATP and its subsequent hydrolysis by HslU are essential for unfolding of protein substrates subsequently hydrolyzed by HslV. HslU recognizes the N-terminal part of its protein substrates and unfolds these before they are guided to HslV for hydrolysis. The chain is ATP-dependent protease ATPase subunit HslU from Halalkalibacterium halodurans (strain ATCC BAA-125 / DSM 18197 / FERM 7344 / JCM 9153 / C-125) (Bacillus halodurans).